Reading from the N-terminus, the 144-residue chain is Large ribosomal subunit protein uL15 (144 aa).

The segment at 1 to 57 (MELNNLKPAEGSKHAKRRVGRGIGSGLGKTAGRGHKGQKSRSGGFHKVGFEGGQMPL) is disordered. Residues 21–31 (RGIGSGLGKTA) show a composition bias toward gly residues.

It belongs to the universal ribosomal protein uL15 family. As to quaternary structure, part of the 50S ribosomal subunit.

Functionally, binds to the 23S rRNA. The protein is Large ribosomal subunit protein uL15 of Paraburkholderia phytofirmans (strain DSM 17436 / LMG 22146 / PsJN) (Burkholderia phytofirmans).